The sequence spans 200 residues: Large ribosomal subunit protein uL4 (200 aa).

Residues 44–70 (AQKTRAEVTGSGKKPWRQKGTGRARSG) are disordered.

This sequence belongs to the universal ribosomal protein uL4 family. Part of the 50S ribosomal subunit.

Functionally, one of the primary rRNA binding proteins, this protein initially binds near the 5'-end of the 23S rRNA. It is important during the early stages of 50S assembly. It makes multiple contacts with different domains of the 23S rRNA in the assembled 50S subunit and ribosome. In terms of biological role, protein L4 is a both a transcriptional repressor and a translational repressor protein. It regulates transcription of the S10 operon (to which L4 belongs) by causing premature termination of transcription within the S10 leader. L4 controls the translation of the S10 operon by binding to its mRNA. This protein when expressed in E.coli represses both transcription and translation of the endogenous S10 operon. As the M.morganii S10 leader can be regulated in vitro by the E.coli L4 protein this strongly suggests the endogenous protein controls its own S10 operon in a similar fashion. Its function is as follows. Forms part of the polypeptide exit tunnel. The polypeptide is Large ribosomal subunit protein uL4 (rplD) (Morganella morganii (Proteus morganii)).